Reading from the N-terminus, the 132-residue chain is Large ribosomal subunit protein bL17 (132 aa).

It belongs to the bacterial ribosomal protein bL17 family. As to quaternary structure, part of the 50S ribosomal subunit. Contacts protein L32.

The sequence is that of Large ribosomal subunit protein bL17 from Albidiferax ferrireducens (strain ATCC BAA-621 / DSM 15236 / T118) (Rhodoferax ferrireducens).